A 615-amino-acid chain; its full sequence is Matrix metalloproteinase-25 (615 aa).

The propeptide occupies 1 to 162 (MCFPGSQISP…AAGLVRRRRR (162 aa)). A helical membrane pass occupies residues 53-73 (ILRLPAFGLPLLALLLVPLLP). Positions 143-150 (PRCSLPDV) match the Cysteine switch motif. 2 residues coordinate Zn(2+): cysteine 145 and histidine 287. Glutamate 288 is an active-site residue. Residues histidine 291 and histidine 297 each contribute to the Zn(2+) site. The disordered stretch occupies residues 336-366 (VSQNPNARPTRKPLVPPPQPPAMPPDSPATP). Residues 349 to 366 (LVPPPQPPAMPPDSPATP) show a composition bias toward pro residues. 4 Hemopexin repeats span residues 368–417 (PDRC…WEGL), 421–466 (VKVI…GLPP), 467–515 (GEDV…DGAP), and 516–562 (FAPD…WLDC). Cysteine 371 and cysteine 562 are disulfide-bonded. A disordered region spans residues 547–582 (AESDSPQPIGPKWLDCPAPNSDPRVTSPPKTTSKTR). Alanine 593 carries the GPI-anchor amidated alanine lipid modification. Residues 594-615 (SEQLSPLLLPLLPLVAGEVFSY) constitute a propeptide, removed in mature form.

The protein belongs to the peptidase M10A family. It depends on Zn(2+) as a cofactor. Requires Ca(2+) as cofactor. In terms of processing, the precursor is cleaved by a furin endopeptidase.

The protein localises to the cell membrane. Functionally, may activate progelatinase A. The polypeptide is Matrix metalloproteinase-25 (Mmp25) (Mus musculus (Mouse)).